A 257-amino-acid chain; its full sequence is NAD-capped RNA hydrolase NudC (257 aa).

Arg69 is a binding site for substrate. Residues Cys98 and Cys101 each coordinate Zn(2+). Glu111 serves as a coordination point for substrate. Residues Cys116 and Cys119 each contribute to the Zn(2+) site. Tyr124 is a substrate binding site. Residues 125–248 (PQIAPCIIVA…TVARRLIEDT (124 aa)) enclose the Nudix hydrolase domain. Ala158, Glu174, and Glu178 together coordinate a divalent metal cation. Positions 159–180 (GFVEVGETLEQAVAREVMEESG) match the Nudix box motif. Position 192–199 (192–199 (QPWPFPQS)) interacts with substrate. Glu219 is a binding site for a divalent metal cation. Residue Ala241 participates in substrate binding.

The protein belongs to the Nudix hydrolase family. NudC subfamily. As to quaternary structure, homodimer. It depends on Mg(2+) as a cofactor. Requires Mn(2+) as cofactor. The cofactor is Zn(2+).

The catalysed reaction is a 5'-end NAD(+)-phospho-ribonucleoside in mRNA + H2O = a 5'-end phospho-adenosine-phospho-ribonucleoside in mRNA + beta-nicotinamide D-ribonucleotide + 2 H(+). The enzyme catalyses NAD(+) + H2O = beta-nicotinamide D-ribonucleotide + AMP + 2 H(+). It catalyses the reaction NADH + H2O = reduced beta-nicotinamide D-ribonucleotide + AMP + 2 H(+). Functionally, mRNA decapping enzyme that specifically removes the nicotinamide adenine dinucleotide (NAD) cap from a subset of mRNAs by hydrolyzing the diphosphate linkage to produce nicotinamide mononucleotide (NMN) and 5' monophosphate mRNA. The NAD-cap is present at the 5'-end of some mRNAs and stabilizes RNA against 5'-processing. Has preference for mRNAs with a 5'-end purine. Catalyzes the hydrolysis of a broad range of dinucleotide pyrophosphates. The chain is NAD-capped RNA hydrolase NudC from Klebsiella pneumoniae subsp. pneumoniae (strain ATCC 700721 / MGH 78578).